Reading from the N-terminus, the 202-residue chain is MEIGFTFLDEIVHGVRWDAKYATWDNFTGKPVDGYEVNRIVGTYELAESLLKAKELAATQGYGLLLWDGYRPKRAVNCFMQWAAQPENNLTKESYYPNIDRTEMISKGYVASKSSHSRGSAIDLTLYRLDTGELVPMGSRFDFMDERSHHAANGISCNEAQNRRRLRSIMENSGFEAYSLEWWHYVLRDEPYPNSYFDFPVK.

Zn(2+) contacts are provided by His116 and Asp123. The Proton donor/acceptor role is filled by Glu181. His184 is a Zn(2+) binding site.

Belongs to the peptidase M15D family. Homodimer. Zn(2+) serves as cofactor. The cofactor is Fe(2+). Co(2+) is required as a cofactor. It depends on Ni(2+) as a cofactor.

The enzyme catalyses D-alanyl-D-alanine + H2O = 2 D-alanine. With respect to regulation, inhibited by aminoalkyl phosphinate analogs. Functionally, catalyzes hydrolysis of the D-alanyl-D-alanine dipeptide. In Enterococcus faecium (Streptococcus faecium), this protein is D-alanyl-D-alanine dipeptidase (vanX).